The sequence spans 279 residues: Thioredoxin-like 1-1, chloroplastic (279 aa).

Residues 56–202 (ALTERKARPL…FKDALAKHGP (147 aa)) enclose the Thioredoxin domain. Catalysis depends on nucleophile residues C125 and C128. C125 and C128 are disulfide-bonded.

This sequence belongs to the thioredoxin family.

Its function is as follows. Probable thiol-disulfide oxidoreductase that may participate in various redox reactions. This Oryza sativa subsp. japonica (Rice) protein is Thioredoxin-like 1-1, chloroplastic.